A 374-amino-acid chain; its full sequence is N-acetyldiaminopimelate deacetylase (374 aa).

Asp69 is a catalytic residue. The active-site Proton acceptor is the Glu128.

This sequence belongs to the peptidase M20A family. N-acetyldiaminopimelate deacetylase subfamily.

It catalyses the reaction N-acetyl-(2S,6S)-2,6-diaminopimelate + H2O = (2S,6S)-2,6-diaminopimelate + acetate. The protein operates within amino-acid biosynthesis; L-lysine biosynthesis via DAP pathway; LL-2,6-diaminopimelate from (S)-tetrahydrodipicolinate (acetylase route): step 3/3. Its function is as follows. Catalyzes the conversion of N-acetyl-diaminopimelate to diaminopimelate and acetate. The protein is N-acetyldiaminopimelate deacetylase (ykuR) of Bacillus subtilis (strain 168).